The primary structure comprises 233 residues: 2-C-methyl-D-erythritol 4-phosphate cytidylyltransferase (233 aa).

Belongs to the IspD/TarI cytidylyltransferase family. IspD subfamily.

The catalysed reaction is 2-C-methyl-D-erythritol 4-phosphate + CTP + H(+) = 4-CDP-2-C-methyl-D-erythritol + diphosphate. It functions in the pathway isoprenoid biosynthesis; isopentenyl diphosphate biosynthesis via DXP pathway; isopentenyl diphosphate from 1-deoxy-D-xylulose 5-phosphate: step 2/6. Catalyzes the formation of 4-diphosphocytidyl-2-C-methyl-D-erythritol from CTP and 2-C-methyl-D-erythritol 4-phosphate (MEP). The sequence is that of 2-C-methyl-D-erythritol 4-phosphate cytidylyltransferase from Vibrio atlanticus (strain LGP32) (Vibrio splendidus (strain Mel32)).